The sequence spans 98 residues: NADH-ubiquinone oxidoreductase chain 4L (98 aa).

2 consecutive transmembrane segments (helical) span residues 29–49 (SLLC…LLIL) and 61–81 (ILLL…LVTV).

Belongs to the complex I subunit 4L family. Core subunit of respiratory chain NADH dehydrogenase (Complex I) which is composed of 45 different subunits.

The protein localises to the mitochondrion inner membrane. It catalyses the reaction a ubiquinone + NADH + 5 H(+)(in) = a ubiquinol + NAD(+) + 4 H(+)(out). Its function is as follows. Core subunit of the mitochondrial membrane respiratory chain NADH dehydrogenase (Complex I) which catalyzes electron transfer from NADH through the respiratory chain, using ubiquinone as an electron acceptor. Part of the enzyme membrane arm which is embedded in the lipid bilayer and involved in proton translocation. In Cheirogaleus medius (Fat-tailed dwarf lemur), this protein is NADH-ubiquinone oxidoreductase chain 4L (MT-ND4L).